The primary structure comprises 225 residues: Octanoyltransferase (225 aa).

The 176-residue stretch at 44–219 folds into the BPL/LPL catalytic domain; it reads RETPDEIWLL…NFIAQLTHRI (176 aa). Substrate contacts are provided by residues 83-90, 150-152, and 163-165; these read RGGQITYH, SLG, and GIA. Cysteine 181 acts as the Acyl-thioester intermediate in catalysis.

Belongs to the LipB family.

It localises to the cytoplasm. It carries out the reaction octanoyl-[ACP] + L-lysyl-[protein] = N(6)-octanoyl-L-lysyl-[protein] + holo-[ACP] + H(+). It participates in protein modification; protein lipoylation via endogenous pathway; protein N(6)-(lipoyl)lysine from octanoyl-[acyl-carrier-protein]: step 1/2. Its function is as follows. Catalyzes the transfer of endogenously produced octanoic acid from octanoyl-acyl-carrier-protein onto the lipoyl domains of lipoate-dependent enzymes. Lipoyl-ACP can also act as a substrate although octanoyl-ACP is likely to be the physiological substrate. The sequence is that of Octanoyltransferase from Nitrosomonas eutropha (strain DSM 101675 / C91 / Nm57).